Here is a 303-residue protein sequence, read N- to C-terminus: N-acetyl-D-glucosamine kinase (303 aa).

ATP contacts are provided by residues 4–11 (GFDMGGTK) and 133–140 (GVGGGLIV). The Zn(2+) site is built by His157, Cys177, Cys179, and Cys184.

Belongs to the ROK (NagC/XylR) family. NagK subfamily.

It carries out the reaction N-acetyl-D-glucosamine + ATP = N-acetyl-D-glucosamine 6-phosphate + ADP + H(+). It participates in cell wall biogenesis; peptidoglycan recycling. Functionally, catalyzes the phosphorylation of N-acetyl-D-glucosamine (GlcNAc) derived from cell-wall degradation, yielding GlcNAc-6-P. In Yersinia enterocolitica serotype O:8 / biotype 1B (strain NCTC 13174 / 8081), this protein is N-acetyl-D-glucosamine kinase.